Consider the following 48-residue polypeptide: Photosystem II reaction center protein K (48 aa).

The propeptide occupies 1–11; the sequence is MFLFNLEQSIG. Residues 23–43 traverse the membrane as a helical segment; that stretch reads LVDVLPIIPLLFLLLAFVWQA.

This sequence belongs to the PsbK family. PSII is composed of 1 copy each of membrane proteins PsbA, PsbB, PsbC, PsbD, PsbE, PsbF, PsbH, PsbI, PsbJ, PsbK, PsbL, PsbM, PsbT, PsbX, PsbY, PsbZ, Psb30/Ycf12, at least 3 peripheral proteins of the oxygen-evolving complex and a large number of cofactors. It forms dimeric complexes.

Its subcellular location is the plastid. The protein localises to the chloroplast thylakoid membrane. Its function is as follows. One of the components of the core complex of photosystem II (PSII). PSII is a light-driven water:plastoquinone oxidoreductase that uses light energy to abstract electrons from H(2)O, generating O(2) and a proton gradient subsequently used for ATP formation. It consists of a core antenna complex that captures photons, and an electron transfer chain that converts photonic excitation into a charge separation. This Lepocinclis buetschlii protein is Photosystem II reaction center protein K.